Consider the following 153-residue polypeptide: Ubiquitin/ISG15-conjugating enzyme E2 L6 (153 aa).

Positions 2–149 (MASMRVVKEL…AEEFTLRFGV (148 aa)) constitute a UBC core domain. Cys86 serves as the catalytic Glycyl thioester intermediate.

It belongs to the ubiquitin-conjugating enzyme family. In terms of assembly, interacts with RNF19A, RNF19B and RNF144B. Interacts with FLT3 (tyrosine phosphorylated). Post-translationally, ISGylated. Present in natural killer cells (at protein level).

It catalyses the reaction S-ubiquitinyl-[E1 ubiquitin-activating enzyme]-L-cysteine + [E2 ubiquitin-conjugating enzyme]-L-cysteine = [E1 ubiquitin-activating enzyme]-L-cysteine + S-ubiquitinyl-[E2 ubiquitin-conjugating enzyme]-L-cysteine.. Its pathway is protein modification; protein ubiquitination. Its function is as follows. Catalyzes the covalent attachment of ubiquitin or ISG15 to other proteins. Functions in the E6/E6-AP-induced ubiquitination of p53/TP53. Promotes ubiquitination and subsequent proteasomal degradation of FLT3. In Homo sapiens (Human), this protein is Ubiquitin/ISG15-conjugating enzyme E2 L6 (UBE2L6).